The chain runs to 705 residues: Dolichyl-diphosphooligosaccharide--protein glycosyltransferase subunit STT3A (705 aa).

Residues 1-17 (MTKLGFLRLSYEKQDTL) are Cytoplasmic-facing. Residues 18 to 38 (LKLLILSMAAVLSFSTRLFAV) traverse the membrane as a helical segment. At 39-119 (LRFESVIHEF…IDIRNVCVFL (81 aa)) the chain is on the lumenal side. The DXD motif 1 signature appears at 47–49 (EFD). Asp-49 is a binding site for Mn(2+). A helical transmembrane segment spans residues 120–138 (APLFSSFTTIVTYHLTKEL). Over 139-140 (KD) the chain is Cytoplasmic. Residues 141-158 (AGAGLLAAAMIAVVPGYI) form a helical membrane-spanning segment. Over 159–169 (SRSVAGSYDNE) the chain is Lumenal. Mn(2+) is bound by residues Asp-167 and Glu-169. Residues 167-169 (DNE) carry the DXD motif 2 motif. Residues 170–189 (GIAIFCMLLTYYMWIKAVKT) traverse the membrane as a helical segment. Over 190–191 (GS) the chain is Cytoplasmic. A helical membrane pass occupies residues 192–206 (IYWAAKCALAYFYMV). At 207-211 (SSWGG) the chain is on the lumenal side. A helical transmembrane segment spans residues 212–228 (YVFLINLIPLHVLVLML). At 229–233 (TGRFS) the chain is on the cytoplasmic side. A helical transmembrane segment spans residues 234 to 259 (HRIYVAYCTVYCLGTILSMQISFVGF). At 260–267 (QPVLSSEH) the chain is on the lumenal side. The helical transmembrane segment at 268 to 287 (MAAFGVFGLCQIHAFVDYLR) threads the bilayer. At 288 to 300 (SKLNPQQFEVLFR) the chain is on the cytoplasmic side. Residues 301 to 321 (SVISLVGFVLLTVGALLMLTG) form a helical membrane-spanning segment. The Lumenal segment spans residues 322–356 (KISPWTGRFYSLLDPSYAKNNIPIIASVSEHQPTT). Residues 348 to 351 (SVSE) carry the SVSE motif motif. Residues 357–379 (WSSYYFDLQLLVFMFPVGLYYCF) traverse the membrane as a helical segment. The Cytoplasmic portion of the chain corresponds to 380-385 (SNLSDA). The helical transmembrane segment at 386–402 (RIFIIMYGVTSMYFSAV) threads the bilayer. Residues 403–406 (MVRL) lie on the Lumenal side of the membrane. Position 405 (Arg-405) interacts with dolichyl diphosphooligosaccharide. A helical transmembrane segment spans residues 407–428 (MLVLAPVMCILSGIGVSQVLST). Residues 429-453 (YMKNLDISRPDKKSKKQQDSTYPIK) lie on the Cytoplasmic side of the membrane. A helical membrane pass occupies residues 454 to 473 (NEVASGMILVMAFFLITYTF). At 474–705 (HSTWVTSEAY…DLDNRGLSRT (232 aa)) the chain is on the lumenal side. Positions 525-527 (WWD) are interacts with target acceptor peptide in protein substrate. Positions 525 to 529 (WWDYG) match the WWDYG motif motif. A dolichyl diphosphooligosaccharide-binding site is contributed by Tyr-530. N-linked (GlcNAc...) asparagine glycans are attached at residues Asn-537 and Asn-544. N-linked (GlcNAc...) (high mannose) asparagine glycosylation is present at Asn-548. The DK motif signature appears at 592–599 (DINKFLWM).

Belongs to the STT3 family. In terms of assembly, component of the oligosaccharyltransferase (OST) complex. There are 2 OST complexes, OST-A and OST-B, which contain STT3A or STT3B as catalytic subunit, respectively. OST-A and OST-B contain common core subunits RPN1, RPN2, OST48, OST4, DAD1 and TMEM258, and OST-A contains DC2/OSTC and KRTCAP2/KCP2 specific accessory subunits. OST-A complex assembly occurs through the formation of 3 subcomplexes. Subcomplex 1 contains RPN1 and TMEM258, subcomplex 2 contains the OST-A-specific subunits STT3A, DC2/OSTC, and KCP2 as well as the core subunit OST4, and subcomplex 3 contains RPN2, DAD1, and OST48. The OST-A complex can form stable complexes with the Sec61 complex or with both the Sec61 and TRAP complexes. The cofactor is Mg(2+). It depends on Mn(2+) as a cofactor.

It is found in the endoplasmic reticulum. The protein resides in the endoplasmic reticulum membrane. The catalysed reaction is a di-trans,poly-cis-dolichyl diphosphooligosaccharide + L-asparaginyl-[protein] = N(4)-(oligosaccharide-(1-&gt;4)-N-acetyl-beta-D-glucosaminyl-(1-&gt;4)-N-acetyl-beta-D-glucosaminyl)-L-asparaginyl-[protein] + a di-trans,poly-cis-dolichyl diphosphate + H(+). It participates in protein modification; protein glycosylation. Catalytic subunit of the oligosaccharyl transferase (OST) complex that catalyzes the initial transfer of a defined glycan (Glc(3)Man(9)GlcNAc(2) in eukaryotes) from the lipid carrier dolichol-pyrophosphate to an asparagine residue within an Asn-X-Ser/Thr consensus motif in nascent polypeptide chains, the first step in protein N-glycosylation. N-glycosylation occurs cotranslationally and the complex associates with the Sec61 complex at the channel-forming translocon complex that mediates protein translocation across the endoplasmic reticulum (ER). All subunits are required for a maximal enzyme activity. This subunit contains the active site and the acceptor peptide and donor lipid-linked oligosaccharide (LLO) binding pockets. STT3A is present in the majority of OST complexes and mediates cotranslational N-glycosylation of most sites on target proteins, while STT3B-containing complexes are required for efficient post-translational glycosylation and mediate glycosylation of sites that have been skipped by STT3A. STT3A-containing OST-A complex is also required to prevent hyperglycosylation of some target proteins by preventing glycosylation of facultative sites before folding of target proteins is completed. The protein is Dolichyl-diphosphooligosaccharide--protein glycosyltransferase subunit STT3A of Mus musculus (Mouse).